The chain runs to 216 residues: Deoxyribose-phosphate aldolase (216 aa).

The active-site Proton donor/acceptor is the Asp-89. Residue Lys-153 is the Schiff-base intermediate with acetaldehyde of the active site. Lys-182 functions as the Proton donor/acceptor in the catalytic mechanism.

The protein belongs to the DeoC/FbaB aldolase family. DeoC type 1 subfamily.

It localises to the cytoplasm. It carries out the reaction 2-deoxy-D-ribose 5-phosphate = D-glyceraldehyde 3-phosphate + acetaldehyde. It participates in carbohydrate degradation; 2-deoxy-D-ribose 1-phosphate degradation; D-glyceraldehyde 3-phosphate and acetaldehyde from 2-deoxy-alpha-D-ribose 1-phosphate: step 2/2. In terms of biological role, catalyzes a reversible aldol reaction between acetaldehyde and D-glyceraldehyde 3-phosphate to generate 2-deoxy-D-ribose 5-phosphate. This Treponema denticola (strain ATCC 35405 / DSM 14222 / CIP 103919 / JCM 8153 / KCTC 15104) protein is Deoxyribose-phosphate aldolase.